Here is a 142-residue protein sequence, read N- to C-terminus: Large ribosomal subunit protein uL13 (142 aa).

Belongs to the universal ribosomal protein uL13 family. Part of the 50S ribosomal subunit.

Its function is as follows. This protein is one of the early assembly proteins of the 50S ribosomal subunit, although it is not seen to bind rRNA by itself. It is important during the early stages of 50S assembly. This is Large ribosomal subunit protein uL13 from Acholeplasma laidlawii (strain PG-8A).